Here is a 112-residue protein sequence, read N- to C-terminus: UPF0102 protein THEYE_A1950 (112 aa).

The protein belongs to the UPF0102 family.

In Thermodesulfovibrio yellowstonii (strain ATCC 51303 / DSM 11347 / YP87), this protein is UPF0102 protein THEYE_A1950.